The sequence spans 1441 residues: Pleiotropic drug resistance protein TUR2 (1441 aa).

The ABC transporter 1 domain occupies 158 to 430 (LSALHLMPSG…FESMGFKCPE (273 aa)). 191 to 198 (GPPGAGKT) is a binding site for ATP. Positions 508–721 (ELLKACIDRE…AQNAIAVNEF (214 aa)) constitute an ABC transmembrane type-2 1 domain. 6 helical membrane passes run 526-546 (FVYI…MTVF), 559-579 (ATIF…NGFA), 614-634 (IPIS…VIGF), 646-666 (LLLV…AAVG), 671-691 (VADT…GFII), and 756-776 (IGVG…ILFL). An ABC transporter 2 domain is found at 843-1095 (ITFDNVKYSV…HLIKYFESID (253 aa)). 888–895 (GVSGRGKT) contacts ATP. Residues 1168 to 1382 (MQCLACLWKQ…TLYGLVVSQF (215 aa)) enclose the ABC transmembrane type-2 2 domain. Helical transmembrane passes span 1187–1207 (YTAT…TIFW), 1215–1235 (TSLD…FIGI), 1275–1295 (VPHI…MIGF), 1302–1322 (FLWY…YGMM), 1332–1352 (IAAI…GFII), 1363–1383 (WYYW…SQFG), and 1413–1433 (VVGV…AFSI).

Belongs to the ABC transporter superfamily. ABCG family. PDR (TC 3.A.1.205) subfamily. Ubiquitous.

The protein localises to the cell membrane. In terms of biological role, may be a general defense protein. Seems involved in turion (dormant buds) formation. Confers resistance to the diterpenoid antifungal agent sclareol. The protein is Pleiotropic drug resistance protein TUR2 (TUR2) of Spirodela polyrhiza (Giant duckweed).